A 507-amino-acid polypeptide reads, in one-letter code: Bifunctional purine biosynthesis protein PurH (507 aa).

Positions 1–144 (MKRALLSVSD…KNSDSVWAVV (144 aa)) constitute an MGS-like domain.

The protein belongs to the PurH family.

It catalyses the reaction (6R)-10-formyltetrahydrofolate + 5-amino-1-(5-phospho-beta-D-ribosyl)imidazole-4-carboxamide = 5-formamido-1-(5-phospho-D-ribosyl)imidazole-4-carboxamide + (6S)-5,6,7,8-tetrahydrofolate. It carries out the reaction IMP + H2O = 5-formamido-1-(5-phospho-D-ribosyl)imidazole-4-carboxamide. Its pathway is purine metabolism; IMP biosynthesis via de novo pathway; 5-formamido-1-(5-phospho-D-ribosyl)imidazole-4-carboxamide from 5-amino-1-(5-phospho-D-ribosyl)imidazole-4-carboxamide (10-formyl THF route): step 1/1. It functions in the pathway purine metabolism; IMP biosynthesis via de novo pathway; IMP from 5-formamido-1-(5-phospho-D-ribosyl)imidazole-4-carboxamide: step 1/1. The protein is Bifunctional purine biosynthesis protein PurH of Lacticaseibacillus paracasei (strain ATCC 334 / BCRC 17002 / CCUG 31169 / CIP 107868 / KCTC 3260 / NRRL B-441) (Lactobacillus paracasei).